A 515-amino-acid polypeptide reads, in one-letter code: Alpha,alpha-trehalose-phosphate synthase [UDP-forming] 1 (515 aa).

D-glucose 6-phosphate is bound by residues Y97 and D151. UDP contacts are provided by R287 and K292. Residues R287 and K292 each coordinate UDP-alpha-D-glucose. R325 contacts D-glucose 6-phosphate. Residues V364 and 390-394 (LVAYE) contribute to the UDP site. UDP-alpha-D-glucose is bound at residue 386–394 (DGMNLVAYE). The segment at 483–515 (GKFQSRKAKLPESADAEKPMNGSGESEESQTTQ) is disordered. The segment covering 491-500 (KLPESADAEK) has biased composition (basic and acidic residues).

The protein belongs to the glycosyltransferase 20 family.

The enzyme catalyses D-glucose 6-phosphate + UDP-alpha-D-glucose = alpha,alpha-trehalose 6-phosphate + UDP + H(+). It functions in the pathway carbohydrate biosynthesis. Its function is as follows. Synthase catalytic subunit of the trehalose synthase complex that catalyzes the production of trehalose from glucose-6-phosphate and UDP-alpha-D-glucose in a two step process. The disaccharide trehalose serves as a storage carbohydrate that is mobilized during conidial germination. Regulates the level of trehalose as a protectant for cell integrity during thermal and oxidative stress. The chain is Alpha,alpha-trehalose-phosphate synthase [UDP-forming] 1 from Aspergillus fumigatus (strain ATCC MYA-4609 / CBS 101355 / FGSC A1100 / Af293) (Neosartorya fumigata).